The following is a 97-amino-acid chain: UPF0147 protein MA_0092 (97 aa).

The protein belongs to the UPF0147 family.

The protein is UPF0147 protein MA_0092 of Methanosarcina acetivorans (strain ATCC 35395 / DSM 2834 / JCM 12185 / C2A).